Consider the following 268-residue polypeptide: Sterol uptake protein 2 (268 aa).

The protein belongs to the SUT1 family.

It localises to the nucleus. Functionally, putative transcription factor involved in the regulation of the activity of the cAMP/protein kinase A pathway. Involved in sterol uptake. With SUT1, positively regulates mating by repressing the expression of the mating inhibitors NCE102, PRR2 and RHO5 in response to pheromone. In Saccharomyces cerevisiae (strain ATCC 204508 / S288c) (Baker's yeast), this protein is Sterol uptake protein 2.